We begin with the raw amino-acid sequence, 228 residues long: Cytidylate kinase (228 aa).

12-20 (GPASAGKST) is an ATP binding site.

Belongs to the cytidylate kinase family. Type 1 subfamily.

It is found in the cytoplasm. It carries out the reaction CMP + ATP = CDP + ADP. The enzyme catalyses dCMP + ATP = dCDP + ADP. This is Cytidylate kinase from Lactiplantibacillus plantarum (strain ATCC BAA-793 / NCIMB 8826 / WCFS1) (Lactobacillus plantarum).